The following is a 427-amino-acid chain: ATP-sensitive inward rectifier potassium channel 12 (427 aa).

The Cytoplasmic portion of the chain corresponds to 1–77; it reads MTASGRTNPY…LADMFTTCVD (77 aa). C75 carries the post-translational modification S-nitrosocysteine. A helical membrane pass occupies residues 78–104; the sequence is IRWRYMLLIFSLAFLASWLLFGVIFWV. R79 and R81 together coordinate a 1,2-diacyl-sn-glycero-3-phospho-(1D-myo-inositol-4,5-bisphosphate). Over 105–129 the chain is Extracellular; sequence IAVAHGDLEPAEAHGRTPCVLQVHG. A disulfide bridge links C123 with C155. The helical; Pore-forming intramembrane region spans 130-146; sequence FMAAFLFSIETQTTIGY. The K(+) site is built by T143, I144, G145, and Y146. A Selectivity filter motif is present at residues 143–148; the sequence is TIGYGL. The Extracellular portion of the chain corresponds to 147–155; it reads GLRCVTEEC. Residues 156-183 traverse the membrane as a helical segment; that stretch reads PVAVFMVVAQSIVGCIIDSFMIGAIMAK. Positions 183 and 188 each coordinate a 1,2-diacyl-sn-glycero-3-phospho-(1D-myo-inositol-4,5-bisphosphate). Residues 184-427 are Cytoplasmic-facing; it reads MARPKKRAQT…QRPYRRESEI (244 aa). Residues 387–396 are compositionally biased toward acidic residues; that stretch reads DEEDEVDGEQ. The segment at 387–427 is disordered; sequence DEEDEVDGEQDSLGPQARRDFDRPQAGTALEQRPYRRESEI. The PDZ-binding signature appears at 425-427; that stretch reads SEI.

The protein belongs to the inward rectifier-type potassium channel (TC 1.A.2.1) family. KCNJ12 subfamily. In terms of assembly, homotetramer. Forms heteromer with KCNJ4. Association, via its PDZ-recognition domain, with LIN7A, LIN7B, LIN7C, DLG1, CASK and APBA1 plays a key role in its localization and trafficking.

The protein localises to the membrane. It catalyses the reaction K(+)(in) = K(+)(out). Activated by phosphatidylinositol 4,5-biphosphate (PtdIns(4,5)P2). PtdIns(4,5)P2 binding to the cytoplasmic side of the channel triggers a conformation change leading to channel opening. Inward rectifying potassium channel that probably participates in controlling the resting membrane potential in electrically excitable cells. Probably participates in establishing action potential waveform and excitability of neuronal and muscle tissues. Inward rectifier potassium channels are characterized by a greater tendency to allow potassium to flow into the cell rather than out of it. Their voltage dependence is regulated by the concentration of extracellular potassium; as external potassium is raised, the voltage range of the channel opening shifts to more positive voltages. The inward rectification is mainly due to the blockage of outward current by internal magnesium. This chain is ATP-sensitive inward rectifier potassium channel 12 (KCNJ12), found in Bos taurus (Bovine).